The primary structure comprises 856 residues: Cyclic di-GMP phosphodiesterase PdeB (856 aa).

2 consecutive transmembrane segments (helical) span residues 7–27 and 230–250; these read ILVFIVGFCLPAVVLVSYCLG and WVSLAVILLGILIVALGYVWL. A PAS domain is found at 303 to 350; it reads QKERGKITLESIAEAVILTDIEAKVIYMNPKAETLLEVASSNAVGESL. Positions 454–587 constitute a GGDEF domain; that stretch reads RSLAVCYLDL…GTNQIHIYDD (134 aa). The region spanning 598 to 852 is the EAL domain; the sequence is APKWAVRIAQ…SYCEQFETRL (255 aa).

It localises to the cell membrane. It catalyses the reaction 3',3'-c-di-GMP + H2O = 5'-phosphoguanylyl(3'-&gt;5')guanosine + H(+). Its function is as follows. Affects motility and biofilm formation, and is linked to the regulation of sulfate uptake and assimilation. In Shewanella oneidensis (strain ATCC 700550 / JCM 31522 / CIP 106686 / LMG 19005 / NCIMB 14063 / MR-1), this protein is Cyclic di-GMP phosphodiesterase PdeB (pdeB).